A 215-amino-acid polypeptide reads, in one-letter code: Imidazole glycerol phosphate synthase subunit HisH (215 aa).

In terms of domain architecture, Glutamine amidotransferase type-1 spans 9–215 (EVVLVDYGLG…QNFVDYCLER (207 aa)). C85 functions as the Nucleophile in the catalytic mechanism. Active-site residues include H193 and E195.

Heterodimer of HisH and HisF.

The protein localises to the cytoplasm. The enzyme catalyses 5-[(5-phospho-1-deoxy-D-ribulos-1-ylimino)methylamino]-1-(5-phospho-beta-D-ribosyl)imidazole-4-carboxamide + L-glutamine = D-erythro-1-(imidazol-4-yl)glycerol 3-phosphate + 5-amino-1-(5-phospho-beta-D-ribosyl)imidazole-4-carboxamide + L-glutamate + H(+). It catalyses the reaction L-glutamine + H2O = L-glutamate + NH4(+). It participates in amino-acid biosynthesis; L-histidine biosynthesis; L-histidine from 5-phospho-alpha-D-ribose 1-diphosphate: step 5/9. In terms of biological role, IGPS catalyzes the conversion of PRFAR and glutamine to IGP, AICAR and glutamate. The HisH subunit catalyzes the hydrolysis of glutamine to glutamate and ammonia as part of the synthesis of IGP and AICAR. The resulting ammonia molecule is channeled to the active site of HisF. The polypeptide is Imidazole glycerol phosphate synthase subunit HisH (Natronomonas pharaonis (strain ATCC 35678 / DSM 2160 / CIP 103997 / JCM 8858 / NBRC 14720 / NCIMB 2260 / Gabara) (Halobacterium pharaonis)).